We begin with the raw amino-acid sequence, 435 residues long: MGKQEVKTRQGERVAIVAGLRTPFARQSTEFSQVPAVDLGKMVVSDLLARTDIDPKLIEQVVFGQVVQMPEAPNIAREIVLGTGMNIHTDAYSVTRACATSFQSAVNVAESIMAGAIDIGIAGGADSSSVLPIGVSKKLAASLLALSKTKTLGQKLKVLSGLGLKDLMPVPPAVAEYSTGLSMGQTAEQMAKTHGITRAEQDALAHRSHTLASQAWRDGKIAGEVMTAFPEPYKKWIAEDNNIRHDSTLEGYAKLRPAFDRQYGSVTAANSTPLTDGAAAVLLMREGRAKELGMEILGYIRGYAFSAIGVESDMLMGPSYATSKVLQSTGLALSDLTLIDMHEAFAAQALANVKMFASDKFAQENLGRSKAMGEIDMDKFNVLGGSIAYGHPFAATGARMMTQTLRELKRRGGGLALNTACAAGGLGAAMILEVE.

C98 acts as the Acyl-thioester intermediate in catalysis. Catalysis depends on proton acceptor residues H391 and C421.

Belongs to the thiolase-like superfamily. Thiolase family. Heterotetramer of two alpha chains (FadJ) and two beta chains (FadI).

It localises to the cytoplasm. The enzyme catalyses an acyl-CoA + acetyl-CoA = a 3-oxoacyl-CoA + CoA. Its pathway is lipid metabolism; fatty acid beta-oxidation. In terms of biological role, catalyzes the final step of fatty acid oxidation in which acetyl-CoA is released and the CoA ester of a fatty acid two carbons shorter is formed. This is 3-ketoacyl-CoA thiolase from Vibrio vulnificus (strain CMCP6).